The primary structure comprises 617 residues: tRNA-dihydrouridine(47) synthase [NAD(P)(+)] (617 aa).

The C3H1-type zinc finger occupies 42 to 70 (KENNALCPAISIGNECPYKENCKFPHDVE). Residues 160 to 193 (EEKPDPSSKVSNIPEENRDATSAISEGKETESVS) are disordered. FMN is bound by residues 245 to 247 (PLT) and glutamine 308. The active-site Proton donor is cysteine 340. Residues lysine 380, histidine 411, 460–462 (NGD), and 483–484 (AR) contribute to the FMN site.

Belongs to the Dus family. Dus3 subfamily. The cofactor is FMN.

Its subcellular location is the cytoplasm. The protein localises to the nucleus. The catalysed reaction is 5,6-dihydrouridine(47) in tRNA + NAD(+) = uridine(47) in tRNA + NADH + H(+). It carries out the reaction 5,6-dihydrouridine(47) in tRNA + NADP(+) = uridine(47) in tRNA + NADPH + H(+). The enzyme catalyses a 5,6-dihydrouridine in mRNA + NAD(+) = a uridine in mRNA + NADH + H(+). It catalyses the reaction a 5,6-dihydrouridine in mRNA + NADP(+) = a uridine in mRNA + NADPH + H(+). In terms of biological role, catalyzes the synthesis of dihydrouridine, a modified base, in various RNAs, such as tRNAs and mRNAs. Modifies the uridine in position 47 (U47) in the D-loop of tRNAs. Also able to mediate formation of dihydrouridine outside of the D-loop of tRNAs. Catalyzes the synthesis of dihydrouridine in some mRNAs, thereby affecting their translation. Dus3-mediated dihydrouridylation of the mRNA encoding alpha-tubulin nda2 is required for meiotic chromosome segregation. The protein is tRNA-dihydrouridine(47) synthase [NAD(P)(+)] of Schizosaccharomyces pombe (strain 972 / ATCC 24843) (Fission yeast).